Here is a 123-residue protein sequence, read N- to C-terminus: Potassium voltage-gated channel subfamily E member 2 (123 aa).

Asparagine 6 and asparagine 29 each carry an N-linked (GlcNAc...) asparagine glycan. Residues 49–69 (VILYLMVMIGMFSFIVVAILV) form a helical membrane-spanning segment. The Cytoplasmic portion of the chain corresponds to 70 to 123 (STVKSKRREHSQHPYHQYIVEDWQEKYKSQILHLEDSKATIHENMGATGFTVSP).

It belongs to the potassium channel KCNE family. Interacts with KCNB1. Associates with KCNH2/ERG1. May associate with KCNQ2 and KCNQ3. Associates with HCN1 and probably HCN2. Heteromultimer with KCNC2. Interacts with KCNC2. Interacts with KCNQ1. Forms a heterooligomer complex with KCNQ1 that targets to the membrane raft and leading to currents with an apparently instantaneous activation, a rapid deactivation process and a linear current-voltage relationship and decreases the amplitude of the outward current.

The protein resides in the cell membrane. Its subcellular location is the apical cell membrane. Ancillary protein that functions as a regulatory subunit of the voltage-gated potassium (Kv) channel complex composed of pore-forming and potassium-conducting alpha subunits and of regulatory beta subunits. KCNE2 beta subunit modulates the gating kinetics and enhances stability of the channel complex. Alters the gating of the delayed rectifier Kv channel containing KCNB1 alpha subunit. Associates with KCNH2/HERG alpha subunit Kv channel to form the rapidly activating component of the delayed rectifying potassium current (IKr) in heart. May associate with KCNQ2 and/or KCNQ3 alpha subunits to modulate the native M-type current. May associate with HCN1 and HCN2 channel subunits to increase potassium current. Forms a heterooligomer complex with KCNQ1/KVLQT1 alpha subunits which leads to currents with an apparently instantaneous activation, a rapid deactivation process and a linear current-voltage relationship and decreases the amplitude of the outward current. KCNQ1-KCNE2 channel associates with Na(+)-coupled myo-inositol symporter in the apical membrane of choroid plexus epithelium and regulates the myo-inositol gradient between blood and cerebrospinal fluid with an impact on neuron excitability. The sequence is that of Potassium voltage-gated channel subfamily E member 2 from Mus musculus (Mouse).